Here is a 216-residue protein sequence, read N- to C-terminus: Peptide methionine sulfoxide reductase MsrA (216 aa).

The active site involves Cys-54.

This sequence belongs to the MsrA Met sulfoxide reductase family.

The enzyme catalyses L-methionyl-[protein] + [thioredoxin]-disulfide + H2O = L-methionyl-(S)-S-oxide-[protein] + [thioredoxin]-dithiol. It catalyses the reaction [thioredoxin]-disulfide + L-methionine + H2O = L-methionine (S)-S-oxide + [thioredoxin]-dithiol. Functionally, has an important function as a repair enzyme for proteins that have been inactivated by oxidation. Catalyzes the reversible oxidation-reduction of methionine sulfoxide in proteins to methionine. The chain is Peptide methionine sulfoxide reductase MsrA from Xanthomonas oryzae pv. oryzae (strain PXO99A).